The following is a 198-amino-acid chain: Outer-membrane lipoprotein carrier protein (198 aa).

An N-terminal signal peptide occupies residues 1–16 (MKKWLVVFFLSASALA).

This sequence belongs to the LolA family. Monomer.

It localises to the periplasm. In terms of biological role, participates in the translocation of lipoproteins from the inner membrane to the outer membrane. Only forms a complex with a lipoprotein if the residue after the N-terminal Cys is not an aspartate (The Asp acts as a targeting signal to indicate that the lipoprotein should stay in the inner membrane). The chain is Outer-membrane lipoprotein carrier protein from Vibrio vulnificus (strain YJ016).